A 185-amino-acid polypeptide reads, in one-letter code: HTH-type transcriptional regulator PuuR (185 aa).

The segment at 1 to 20 (MSDEGLAPGKRLSEIRQQQG) is disordered. The 55-residue stretch at 12–66 (LSEIRQQQGLSQRRAAELSGLTHSAISTIEQDKVSPAISTLQKLLKVYGLSLSEF) folds into the HTH cro/C1-type domain. The segment at residues 23–42 (QRRAAELSGLTHSAISTIEQ) is a DNA-binding region (H-T-H motif). The 68-residue stretch at 111–178 (FETYQPGTTT…TSAGICRIIS (68 aa)) folds into the Cupin type-2 domain.

It functions in the pathway amine and polyamine degradation; putrescine degradation [regulation]. Represses puuA, puuD and puuP. In Escherichia coli (strain K12), this protein is HTH-type transcriptional regulator PuuR (puuR).